The chain runs to 143 residues: Transcriptional regulator MraZ (143 aa).

2 consecutive SpoVT-AbrB domains span residues 5-47 (TYTP…PREE) and 76-119 (TDEQ…DAQA).

It belongs to the MraZ family. As to quaternary structure, forms oligomers.

It is found in the cytoplasm. The protein localises to the nucleoid. The chain is Transcriptional regulator MraZ from Rhodococcus jostii (strain RHA1).